A 385-amino-acid polypeptide reads, in one-letter code: MGTTERESDPIAALILDRLSCTEYACSSLSRVNGGLMNFIYRGTLSRPLPDGATTVIVKHAEEYLSGIEGLSLSTYRSVIAAITLSFGYCVMDVESVQTNRYCVALDEVEVAVPRVYKFDAESNTQILEDITGYITVCEFLTSRCTQSTSPAFTTRLGFRLGSWLGGLHAWGEGRSPAEIIGGVEENQEAQDGSFDFFYGNPVRRVEQFPHLLGDCKEVLEQIRDRAAREQKSRTGEKFGFVHGDILSRKSVLIPGDSVTRDQHLRFVIIDWELSQYECHFRECGEVLGDLYLLKRFQDIDGAMSIIQGFLEGYPPLNEDAIFRTAIYLGLFLLANEVTLSTDYPKQQIEDFVILARDLVLAGWHKDRETLAKTVFGPVFFRAMN.

Positions 38 and 59 each coordinate ATP. Asp245 is a catalytic residue.

The protein belongs to the methylthioribose kinase family. Monomer.

The enzyme catalyses (1S,3S,6S,7S,8S,9S)-6-[(4-methoxyphenyl)methyl]-3-(methylamino)-5-azatricyclo[6.3.1.0(1,5)]dodecane-7,9-diol + ATP = (-)-FR901483 + ADP + 2 H(+). It functions in the pathway secondary metabolite biosynthesis. Phosphotransferase; part of the gene cluster that mediates the biosynthesis of the alkaloid (-)-FR901483, a potent immunosuppressant that shows efficacy in animal models and a probable inhibitor of purine nucleotide biosynthesis by targeting phosphoribosylpyrophosphate amidotransferase (PPAT). FrzJ catalyzes the last step of the pathway by phosphorylating the C4'-OH of dephospho-(-)-FR901483 to produce (-)-FR901483. The biosynthesis of (-)-FR901483 starts with the condensation of two L-tyrosines to yield (S,S)-dityrosyl-piperazine. This process occurs in 3 steps with the non-canonical nonribosomal peptide synthetase FrzA catalyzing the reduction of L-tyrosine into L-tyrosinal, the spontaneous condensation of 2 L-tyrosinal units, and the subsequent reduction by the NmrA-like family domain-containing oxidoreductase FrzB. The cytochrome P450 monooxygenase FrzC then performs coupling between N10 and C1' to morph the piperazine into a 1,4-diazabicyclo[3.2.1]octane spiro-fused to a 2,5-cyclohexadienone. The dienone portion is further reduced to cyclohexanone by the flavin-dependent reductase FrzD. The methyltranserases (MTs) FrzE and FrzF are then involved in the methylation at the C10' amine and the C4 phenolic oxygen, respectively. The order of the two MTs appear to be interchangeable. Cleavage of the C9-N10' bond by the dioxygenase FrzG then leads to formation of a conjugated iminium. In addition to the oxidation of C9, an additional dehydrogenation between C7 and C8 can occur to give a likely shunt product. The next biosynthetic step is the intramolecular aldol condensation catalyzed by the newly identified aldolase FrzH to yield an aza-tricyclic product with the formation of a C9-C3' bond. The short-chain dehydrogenase/reductase FrzI then produces dephospho-(-)-FR901483 that is phosphorylated at C4'-OH into (-)-FR901483 by the phosphotransferase FrzJ. This chain is Phosphotransferase FrzJ, found in Cladobotryum sp.